A 477-amino-acid chain; its full sequence is Glycogen synthase (477 aa).

ADP-alpha-D-glucose is bound at residue Lys-15.

Belongs to the glycosyltransferase 1 family. Bacterial/plant glycogen synthase subfamily.

The enzyme catalyses [(1-&gt;4)-alpha-D-glucosyl](n) + ADP-alpha-D-glucose = [(1-&gt;4)-alpha-D-glucosyl](n+1) + ADP + H(+). It functions in the pathway glycan biosynthesis; glycogen biosynthesis. Synthesizes alpha-1,4-glucan chains using ADP-glucose. This Streptococcus pneumoniae (strain JJA) protein is Glycogen synthase.